A 72-amino-acid polypeptide reads, in one-letter code: UPF0154 protein BLi02038/BL02936 (72 aa).

The chain crosses the membrane as a helical span at residues 4 to 24; that stretch reads WVVILVGVLALLAGVALGFFI.

The protein belongs to the UPF0154 family.

It is found in the cell membrane. The polypeptide is UPF0154 protein BLi02038/BL02936 (Bacillus licheniformis (strain ATCC 14580 / DSM 13 / JCM 2505 / CCUG 7422 / NBRC 12200 / NCIMB 9375 / NCTC 10341 / NRRL NRS-1264 / Gibson 46)).